A 560-amino-acid chain; its full sequence is Formate--tetrahydrofolate ligase (560 aa).

69–76 serves as a coordination point for ATP; sequence TPAGEGKS.

It belongs to the formate--tetrahydrofolate ligase family.

The enzyme catalyses (6S)-5,6,7,8-tetrahydrofolate + formate + ATP = (6R)-10-formyltetrahydrofolate + ADP + phosphate. It functions in the pathway one-carbon metabolism; tetrahydrofolate interconversion. This is Formate--tetrahydrofolate ligase from Listeria monocytogenes serovar 1/2a (strain ATCC BAA-679 / EGD-e).